A 648-amino-acid chain; its full sequence is Threonine--tRNA ligase (648 aa).

Residues 1–61 (MITITFPDGA…EEDGSIEIIT (61 aa)) form the TGS domain. The tract at residues 242–540 (DHRKLGKELD…LIETYKGAFP (299 aa)) is catalytic. Cys336, His387, and His517 together coordinate Zn(2+).

The protein belongs to the class-II aminoacyl-tRNA synthetase family. As to quaternary structure, homodimer. Requires Zn(2+) as cofactor.

Its subcellular location is the cytoplasm. The enzyme catalyses tRNA(Thr) + L-threonine + ATP = L-threonyl-tRNA(Thr) + AMP + diphosphate + H(+). Catalyzes the attachment of threonine to tRNA(Thr) in a two-step reaction: L-threonine is first activated by ATP to form Thr-AMP and then transferred to the acceptor end of tRNA(Thr). Also edits incorrectly charged L-seryl-tRNA(Thr). This Streptococcus equi subsp. zooepidemicus (strain H70) protein is Threonine--tRNA ligase.